Here is a 355-residue protein sequence, read N- to C-terminus: 3-dehydroquinate synthase (355 aa).

NAD(+)-binding positions include 66–71 (SGETTK), 100–104 (GATGD), 124–125 (TT), lysine 136, lysine 145, and 163–166 (FLET). Residues glutamate 178, histidine 242, and histidine 256 each coordinate Zn(2+).

This sequence belongs to the sugar phosphate cyclases superfamily. Dehydroquinate synthase family. Co(2+) serves as cofactor. Zn(2+) is required as a cofactor. Requires NAD(+) as cofactor.

It localises to the cytoplasm. The catalysed reaction is 7-phospho-2-dehydro-3-deoxy-D-arabino-heptonate = 3-dehydroquinate + phosphate. Its pathway is metabolic intermediate biosynthesis; chorismate biosynthesis; chorismate from D-erythrose 4-phosphate and phosphoenolpyruvate: step 2/7. Functionally, catalyzes the conversion of 3-deoxy-D-arabino-heptulosonate 7-phosphate (DAHP) to dehydroquinate (DHQ). This is 3-dehydroquinate synthase from Staphylococcus saprophyticus subsp. saprophyticus (strain ATCC 15305 / DSM 20229 / NCIMB 8711 / NCTC 7292 / S-41).